The following is a 754-amino-acid chain: 17S U2 SnRNP complex component HTATSF1 (754 aa).

2 disordered regions span residues 1-53 (MSGT…YEWD) and 81-122 (GASS…KAES). N-acetylserine is present on S2. The span at 90-122 (EDVHARTAEEPPQEKAPEPTDPRKKGEKRKAES) shows a compositional bias: basic and acidic residues. RRM domains lie at 133 to 218 (TNVY…VAKF) and 264 to 349 (RVVI…AWDG). Positions 259 to 353 (RMRHERVVII…AQAWDGTTDY (95 aa)) are U2AF homology motif (UHM). K297 is modified (N6-acetyllysine). The interval 380 to 415 (RGLRRSDSVSASERAGPSRARHFSEHPSTSKMNAQE) is disordered. The tract at residues 381–754 (GLRRSDSVSA…ILSSDDDDDI (374 aa)) is mediates interaction with the P-TEFb complex. S387, S403, S407, and S409 each carry phosphoserine. Over residues 405-415 (HPSTSKMNAQE) the composition is skewed to polar residues. Glycyl lysine isopeptide (Lys-Gly) (interchain with G-Cter in SUMO2) cross-links involve residues K429 and K430. The tract at residues 433–754 (KTEDGGEFEE…ILSSDDDDDI (322 aa)) is disordered. Residues S445, S452, and S453 each carry the phosphoserine modification. The span at 462 to 476 (CPGKESEEGCPKRGF) shows a compositional bias: basic and acidic residues. 6 positions are modified to phosphoserine: S481, S485, S494, S498, S521, and S529. A compositionally biased stretch (basic and acidic residues) spans 508–538 (LRNDCEENGFAKESEDDPNKESEEEVGPTKE). Over residues 539–552 (SEEDDSEKESDEDC) the composition is skewed to acidic residues. Residues 553 to 563 (SEKQSEDGSER) show a composition bias toward basic and acidic residues. Phosphoserine occurs at positions 557, 561, and 579. A compositionally biased stretch (acidic residues) spans 564 to 579 (EFEENGLEKDLDEEGS). Basic and acidic residues predominate over residues 580-590 (EKELHENVLDK). Residues 591–606 (ELEENDSENSEFEDDG) are compositionally biased toward acidic residues. 5 positions are modified to phosphoserine: S597, S600, S607, S616, and S624. Composition is skewed to acidic residues over residues 613-633 (EEGS…EEDT) and 640-651 (DESNEKEDEEYA). T633 is modified (phosphothreonine). Residue S642 is modified to Phosphoserine. Over residues 652–674 (DEKGLEAADKKEEEGDADEKLFE) the composition is skewed to basic and acidic residues. Residues 675–713 (ESDDKEDEDADGKEVEDADEKLFEDDDSNEKLFDEEEDS) show a composition bias toward acidic residues. S676, S702, S713, S721, and S748 each carry phosphoserine. Over residues 714–725 (NEKLFDDSDERG) the composition is skewed to basic and acidic residues.

This sequence belongs to the HTATSF1 family. In terms of assembly, component of the 17S U2 SnRNP complex, a ribonucleoprotein complex that contains small nuclear RNA (snRNA) U2 and a number of specific proteins. Within the 17S U2 SnRNP complex, interacts (via UHM region) directly with SF3B1. Component of a complex which is at least composed of HTATSF1/Tat-SF1, the P-TEFb complex components CDK9 and CCNT1, RNA polymerase II, SUPT5H, and NCL/nucleolin. Interacts with GTF2F2/RAP30 and POLR2A. Interacts with TCERG1/CA150. Interacts with (poly-ADP-ribosylated) RPA1; promoting HTATSF1 recruitment to DNA damage sites. Interacts (when phosphorylated) with TOPBP1; promoting recruitment of TOPBP1 to DNA damage sites during S-phase. In terms of processing, phosphorylation at Ser-748 by CK2 during S-phase in response to DNA damage promotes interaction with TOPBP1 and double-strand break (DSB) repair via homologous recombination.

It is found in the nucleus. It localises to the chromosome. Its function is as follows. Component of the 17S U2 SnRNP complex of the spliceosome, a large ribonucleoprotein complex that removes introns from transcribed pre-mRNAs. The 17S U2 SnRNP complex (1) directly participates in early spliceosome assembly and (2) mediates recognition of the intron branch site during pre-mRNA splicing by promoting the selection of the pre-mRNA branch-site adenosine, the nucleophile for the first step of splicing. Within the 17S U2 SnRNP complex, HTATSF1 is required to stabilize the branchpoint-interacting stem loop. HTATSF1 is displaced from the 17S U2 SnRNP complex before the stable addition of the 17S U2 SnRNP complex to the spliceosome, destabilizing the branchpoint-interacting stem loop and allowing to probe intron branch site sequences. Also acts as a regulator of transcriptional elongation, possibly by mediating the reciprocal stimulatory effect of splicing on transcriptional elongation. Involved in double-strand break (DSB) repair via homologous recombination in S-phase by promoting the recruitment of TOPBP1 to DNA damage sites. Mechanistically, HTATSF1 is (1) recruited to DNA damage sites in S-phase via interaction with poly-ADP-ribosylated RPA1 and (2) phosphorylated by CK2, promoting recruitment of TOPBP1, thereby facilitating RAD51 nucleofilaments formation and RPA displacement, followed by homologous recombination. The sequence is that of 17S U2 SnRNP complex component HTATSF1 (HTATSF1) from Pongo abelii (Sumatran orangutan).